The sequence spans 232 residues: MSNVDHAEIAKFEALAHRWWDRESEFKPLHDINPLRVNWIDERAGLAGKKVLDIGCGGGILSEAMAQRGASVTGIDMGEAPLAVARLHQLESGVAVDYRQITAEQMAEEMPGQFDVVTCLEMLEHVPDPASVIRACHRLVKPGGQVFLSTINRNPKAYLFAVIGAEYILQLLPRGTHDFRKFIRPSELGAWSREAGLEVKDIIGLTYNPLTKHYKLANDVDVNYMVQTQREA.

4 residues coordinate S-adenosyl-L-methionine: Arg36, Gly55, Asp76, and Leu120.

It belongs to the methyltransferase superfamily. UbiG/COQ3 family.

It carries out the reaction a 3-demethylubiquinol + S-adenosyl-L-methionine = a ubiquinol + S-adenosyl-L-homocysteine + H(+). The enzyme catalyses a 3-(all-trans-polyprenyl)benzene-1,2-diol + S-adenosyl-L-methionine = a 2-methoxy-6-(all-trans-polyprenyl)phenol + S-adenosyl-L-homocysteine + H(+). The protein operates within cofactor biosynthesis; ubiquinone biosynthesis. Its function is as follows. O-methyltransferase that catalyzes the 2 O-methylation steps in the ubiquinone biosynthetic pathway. In Pseudomonas aeruginosa (strain LESB58), this protein is Ubiquinone biosynthesis O-methyltransferase.